A 509-amino-acid chain; its full sequence is tRNA-2-methylthio-N(6)-dimethylallyladenosine synthase (509 aa).

Positions 1–20 (MNEKQKQESGQVNPADKTSE) are disordered. The region spanning 66-184 (RKFYIRTYGC…LPELLSEAYL (119 aa)) is the MTTase N-terminal domain. 6 residues coordinate [4Fe-4S] cluster: C75, C111, C145, C221, C225, and C228. The Radical SAM core domain maps to 207-437 (RNGKIKGWVN…NDLVKEISAK (231 aa)). Residues 440 to 503 (KEYEGRTVEV…TWSLDGVMAG (64 aa)) form the TRAM domain.

This sequence belongs to the methylthiotransferase family. MiaB subfamily. Monomer. Requires [4Fe-4S] cluster as cofactor.

It is found in the cytoplasm. The enzyme catalyses N(6)-dimethylallyladenosine(37) in tRNA + (sulfur carrier)-SH + AH2 + 2 S-adenosyl-L-methionine = 2-methylsulfanyl-N(6)-dimethylallyladenosine(37) in tRNA + (sulfur carrier)-H + 5'-deoxyadenosine + L-methionine + A + S-adenosyl-L-homocysteine + 2 H(+). Functionally, catalyzes the methylthiolation of N6-(dimethylallyl)adenosine (i(6)A), leading to the formation of 2-methylthio-N6-(dimethylallyl)adenosine (ms(2)i(6)A) at position 37 in tRNAs that read codons beginning with uridine. This is tRNA-2-methylthio-N(6)-dimethylallyladenosine synthase from Bacillus velezensis (strain DSM 23117 / BGSC 10A6 / LMG 26770 / FZB42) (Bacillus amyloliquefaciens subsp. plantarum).